A 95-amino-acid chain; its full sequence is Protein TusB (95 aa).

The protein belongs to the DsrH/TusB family. As to quaternary structure, heterohexamer, formed by a dimer of trimers. The hexameric TusBCD complex contains 2 copies each of TusB, TusC and TusD. The TusBCD complex interacts with TusE.

Its subcellular location is the cytoplasm. Part of a sulfur-relay system required for 2-thiolation of 5-methylaminomethyl-2-thiouridine (mnm(5)s(2)U) at tRNA wobble positions. The chain is Protein TusB from Escherichia coli (strain K12 / MC4100 / BW2952).